The following is a 1023-amino-acid chain: MPTITAAQIKSTLQSAKQSAANKLHSAGQSTKDALKKAAEQTRNAGNRLILLIPKDYKGQGSSLNDLVRTADELGIEVQYDEKNGTAITKQVFGTAEKLIGLTERGVTIFAPQLDKLLQKYQKAGNKLGGSAENIGDNLGKAGSVLSTFQNFLGTALSSMKIDELIKKQKSGGNVSSSELAKASIELINQLVDTAASLNNVNSFSQQLNKLGSVLSNTKHLNGVGNKLQNLPNLDNIGAGLDTVSGILSAISASFILSNADADTGTKAAAGVELTTKVLGNVGKGISQYIIAQRAAQGLSTSAAAAGLIASVVTLAISPLSFLSIADKFKRANKIEEYSQRFKKLGYDGDSLLAAFHKETGAIDASLTRISTVLASVSSGISAAATTSLVGAPVSALVGAVTGIISGILEASKQAMFEHVASKMADVIAEWEKKHGKNYFENGYDARHAAFLEDNFKILSQYNKEYSVERSVLITQQHWDTLIGELAGVTRNGDKTLSGKSYIDYYEEGKRLEKKPDEFQKQVFDPLKGNIDLSDSKSSTLLKFVTPLLTPGEEIRERRQSGKYEYITELLVKGVDKWTVKGVQDKGSVYDYSNLIQHASVGNNQYREIRIESHLGDGDDKVFLSAGSANIYAGKGHDVVYYDKTDTGYLTIDGTKATEAGNYTVTRVLGGDVKVLQEVVKEQEVSVGKRTEKTQYRSYEFTHINGKNLTETDNLYSVEELIGTTRADKFFGSKFADIFHGADGDDHIEGNDGNDRLYGDKGNDTLSGGNGDDQLYGGDGNDKLIGGAGNNYLNGGDGDDELQVQGNSLAKNVLSGGKGNDKLYGSEGADLLDGGEGNDLLKGGYGNDIYRYLSGYGHHIIDDDGGKDDKLSLADIDFRDVAFRREGNDLIMYKAEGNVLSIGHKNGITFKNWFEKESGDISNHQIEQIFDKDGRVITPDSLKKALEYQQSNNKASYVYGNDALAYGSQGNLNPLINEISKIISAAGNFDVKEERAAASLLQLSGNASDFSYGRNSITLTASA.

A run of 3 helical transmembrane segments spans residues 237–259 (IGAG…ILSN), 267–326 (KAAA…LSIA), and 364–410 (DASL…GILE). Residues lysine 563 and lysine 689 are each lipidated (N6-myristoyl lysine). Hemolysin-type calcium-binding repeat units lie at residues 731–748 (FGSK…DDHI), 749–766 (EGND…NDTL), 767–784 (SGGN…NDKL), 785–802 (IGGA…DDEL), 815–832 (SGGK…ADLL), and 833–850 (DGGE…NDIY). Over residues 747-763 (HIEGNDGNDRLYGDKGN) the composition is skewed to basic and acidic residues. The tract at residues 747–780 (HIEGNDGNDRLYGDKGNDTLSGGNGDDQLYGGDG) is disordered.

The protein belongs to the RTX prokaryotic toxin (TC 1.C.11) family. In terms of processing, myristoylated by HlyC; the toxin only becomes active when modified. Mainly myristoylated, while a minor fraction is acylated with pentadecanoyl (C15:0; 26%) and heptadecanoyl (C17:0; 6%) fatty acyl groups. Fatty acylation is involved in binding to host membranes and promotes the irreversible insertion of Hemolysin into the host cell membrane. Can be activated by both myristoylation and palmitoylation, but HlyC catalyzes lysine myristoylation.

Its subcellular location is the secreted. The protein resides in the host cell membrane. Functionally, bacterial hemolysins are exotoxins that attack blood cell membranes and cause cell rupture by forming a pore. This chain is Hemolysin, chromosomal, found in Escherichia coli.